Consider the following 441-residue polypeptide: Trigger factor (441 aa).

Residues 175–257 (GDFISLSLHV…VNAVIEVVAP (83 aa)) enclose the PPIase FKBP-type domain.

Belongs to the FKBP-type PPIase family. Tig subfamily.

It is found in the cytoplasm. The catalysed reaction is [protein]-peptidylproline (omega=180) = [protein]-peptidylproline (omega=0). Functionally, involved in protein export. Acts as a chaperone by maintaining the newly synthesized protein in an open conformation. Functions as a peptidyl-prolyl cis-trans isomerase. The chain is Trigger factor from Chlamydia abortus (strain DSM 27085 / S26/3) (Chlamydophila abortus).